Reading from the N-terminus, the 993-residue chain is Chromosome transmission fidelity protein 18 homolog (993 aa).

Positions 26-72 are disordered; it reads PDEFNAYDGPSTSKQAAEKQKENRAPVAALRDSTRLGNSTLGSPQLS. Polar residues predominate over residues 60-72; that stretch reads RLGNSTLGSPQLS. 427 to 434 contributes to the ATP binding site; that stretch reads GPPGLGKT. Residues 892–913 form a disordered region; that stretch reads AAPKGGAPSAPAAKKKTSGAAA. A compositionally biased stretch (low complexity) spans 894–913; the sequence is PKGGAPSAPAAKKKTSGAAA.

This sequence belongs to the activator 1 small subunits family. CTF18 subfamily. Component of the CTF18-RFC complex.

It is found in the nucleus. Functionally, chromosome cohesion factor involved in sister chromatid cohesion and fidelity of chromosome transmission. Component of one of the cell nuclear antigen loader complexes, CTF18-replication factor C (CTF18-RFC). The CTF18-RFC complex catalyzes the ATP-dependent loading of PCNA onto primed and gapped DNA and has weak ATPase activity. The CTF18-RFC complex catalyzes the ATP-dependent loading of PCNA onto primed and gapped DNA. This chain is Chromosome transmission fidelity protein 18 homolog, found in Drosophila melanogaster (Fruit fly).